The following is a 218-amino-acid chain: Protein-methionine-sulfoxide reductase heme-binding subunit MsrQ (218 aa).

5 helical membrane-spanning segments follow: residues 14–34 (AVHA…WQVW), 60–80 (LLLI…AVLI), 86–106 (LGLY…WLDL), 121–141 (PYIT…ITST), and 155–175 (LHML…WLVK).

The protein belongs to the MsrQ family. Heterodimer of a catalytic subunit (MsrP) and a heme-binding subunit (MsrQ). FMN is required as a cofactor. Requires heme b as cofactor.

It localises to the cell inner membrane. Part of the MsrPQ system that repairs oxidized periplasmic proteins containing methionine sulfoxide residues (Met-O), using respiratory chain electrons. Thus protects these proteins from oxidative-stress damage caused by reactive species of oxygen and chlorine generated by the host defense mechanisms. MsrPQ is essential for the maintenance of envelope integrity under bleach stress, rescuing a wide series of structurally unrelated periplasmic proteins from methionine oxidation. MsrQ provides electrons for reduction to the reductase catalytic subunit MsrP, using the quinone pool of the respiratory chain. In Xanthomonas campestris pv. campestris (strain B100), this protein is Protein-methionine-sulfoxide reductase heme-binding subunit MsrQ.